Consider the following 59-residue polypeptide: MSQSRTLRQKSQKYQENIEKRGVASPKKKEDGLNINPYVLGFIIFVVVGSTLLQILKGQ.

The interval 1-30 (MSQSRTLRQKSQKYQENIEKRGVASPKKKE) is disordered. Over 1–34 (MSQSRTLRQKSQKYQENIEKRGVASPKKKEDGLN) the chain is Cytoplasmic. Residues 16–30 (ENIEKRGVASPKKKE) are compositionally biased toward basic and acidic residues. The helical; Anchor for type IV membrane protein transmembrane segment at 35-55 (INPYVLGFIIFVVVGSTLLQI) threads the bilayer. At 56-59 (LKGQ) the chain is on the extracellular side.

It belongs to the RAMP4 family.

The protein localises to the membrane. It localises to the endoplasmic reticulum membrane. In terms of biological role, may interact with target proteins during translocation into the lumen of the endoplasmic reticulum. May protect unfolded target proteins against degradation and facilitate correct glycosylation. This is Probable stress-associated endoplasmic reticulum protein (serp) from Dictyostelium discoideum (Social amoeba).